We begin with the raw amino-acid sequence, 785 residues long: Protein kintoun (785 aa).

2 stretches are compositionally biased toward basic and acidic residues: residues 622–638 and 662–679; these read EHNEQCTDHSESERDTS and HNIELGREHTSERDKEPK. Disordered stretches follow at residues 622–698 and 719–749; these read EHNE…DSHL and KSSVQTTQESDLDEDDMPDNSDHLQNSASSN. Over residues 681–695 the composition is skewed to polar residues; it reads TSCTAESTSGQQPND. Over residues 728–737 the composition is skewed to acidic residues; the sequence is SDLDEDDMPD.

This sequence belongs to the PIH1 family. Kintoun subfamily.

The protein localises to the cytoplasm. It is found in the dynein axonemal particle. Its function is as follows. Required for cytoplasmic pre-assembly of axonemal dyneins, thereby playing a central role in motility in cilia and flagella. Involved in pre-assembly of dynein arm complexes in the cytoplasm before intraflagellar transport loads them for the ciliary compartment. In Xenopus tropicalis (Western clawed frog), this protein is Protein kintoun.